Here is a 753-residue protein sequence, read N- to C-terminus: CCR4-NOT transcription complex subunit 3 (753 aa).

The disordered stretch occupies residues 240–534 (ATSPPSHSHM…PPQFSTAPEI (295 aa)). A compositionally biased stretch (low complexity) spans 257–268 (SSSTPTSTTSSS). Residues 284–293 (DDKKRGRSTD) show a composition bias toward basic and acidic residues. A Phosphothreonine modification is found at T292. The span at 294–315 (SEVSQSPAKNGSKPVHSNQHPQ) shows a compositional bias: polar residues. S299 carries the phosphoserine modification. Residues 317–330 (PAVPPTYPSGPPPA) show a composition bias toward pro residues. The segment covering 350–376 (PSALGPKASPAPSHNSGTPAPYAQAVA) has biased composition (low complexity). Over residues 396–408 (SGGGGGGSGGGGS) the composition is skewed to gly residues. Residues 424–433 (NGATSYSSVV) show a composition bias toward polar residues. Positions 441–457 (ALSSSGGNNASSQALGP) are enriched in low complexity. Residues 458 to 467 (PSGPHNPPPS) show a composition bias toward pro residues. The span at 479–491 (GAGGVAPGSGNNS) shows a compositional bias: gly residues. Residue S542 is modified to Phosphoserine. The tract at residues 661–753 (EFYQRLSTET…YRYLEDRDLQ (93 aa)) is repressor domain.

The protein belongs to the CNOT2/3/5 family. In terms of assembly, component of the CCR4-NOT complex; distinct complexes seem to exist that differ in the participation of probably mutually exclusive catalytic subunits. In the complex interacts directly with CNOT2. Interacts with TIP120B and NANOS2. Interacts with EBF1. Interacts in an RNA-independent manner with BICC1 (via KH domains). Ubiquitous. Highly expressed in brain, heart, thymus, spleen, kidney, liver, small intestine, lung and peripheral blood leukocytes.

The protein localises to the cytoplasm. It localises to the nucleus. Its subcellular location is the P-body. In terms of biological role, component of the CCR4-NOT complex which is one of the major cellular mRNA deadenylases and is linked to various cellular processes including bulk mRNA degradation, miRNA-mediated repression, translational repression during translational initiation and general transcription regulation. Additional complex functions may be a consequence of its influence on mRNA expression. May be involved in metabolic regulation; may be involved in recruitment of the CCR4-NOT complex to deadenylation target mRNAs involved in energy metabolism. Involved in mitotic progression and regulation of the spindle assembly checkpoint by regulating the stability of MAD1L1 mRNA. Can repress transcription and may link the CCR4-NOT complex to transcriptional regulation; the repressive function may involve histone deacetylases. Involved in the maintenance of embryonic stem (ES) cell identity. This chain is CCR4-NOT transcription complex subunit 3, found in Homo sapiens (Human).